Reading from the N-terminus, the 206-residue chain is Protein Ta0236 (206 aa).

One can recognise an AMMECR1 domain in the interval 16 to 205; that stretch reads DIGTKAVRLA…EKDPEGVVEK (190 aa).

This is Protein Ta0236 from Thermoplasma acidophilum (strain ATCC 25905 / DSM 1728 / JCM 9062 / NBRC 15155 / AMRC-C165).